Reading from the N-terminus, the 1067-residue chain is Ubiquitin carboxyl-terminal hydrolase 26 (1067 aa).

The segment covering 1–12 (MSRPNTRNKNKR) has biased composition (basic residues). The tract at residues 1 to 22 (MSRPNTRNKNKRQRPDAVDSSS) is disordered. The 337-residue stretch at 106-442 (AGLTNLGATC…DAYMLMYSLR (337 aa)) folds into the USP domain. C115 acts as the Nucleophile in catalysis. H359 functions as the Proton acceptor in the catalytic mechanism. Residues 385 to 418 (KRPCNEASSSTPQSESNGTASSGNITDGIQSGSS) are disordered. Over residues 390–418 (EASSSTPQSESNGTASSGNITDGIQSGSS) the composition is skewed to polar residues. 3 consecutive DUSP domains span residues 503–595 (NALT…GDYC), 610–711 (DSYR…DCTC), and 738–861 (TLKV…SAFI). In terms of domain architecture, Ubiquitin-like spans 948-1031 (FEVDRRTSKR…LWVRDTEMHE (84 aa)).

Belongs to the peptidase C19 family. Expressed in seedlings, roots, stems, leaves and inflorescences.

It is found in the nucleus. The enzyme catalyses Thiol-dependent hydrolysis of ester, thioester, amide, peptide and isopeptide bonds formed by the C-terminal Gly of ubiquitin (a 76-residue protein attached to proteins as an intracellular targeting signal).. Its function is as follows. Recognizes and hydrolyzes the peptide bond at the C-terminal Gly of ubiquitin. Involved in the processing of poly-ubiquitin precursors as well as that of ubiquitinated proteins. Deubiquitinates H2BK143ub1 of histone H2B. This Arabidopsis thaliana (Mouse-ear cress) protein is Ubiquitin carboxyl-terminal hydrolase 26 (UBP26).